Here is a 197-residue protein sequence, read N- to C-terminus: MNLVPTVIEQSSRGERAYDIYSRLLKDRIIMLSGPIDDDLANSIISQLLFLDAQDSEKDIYLYINSPGGVVTAGLAIYDTMNFIKSDVQTIVMGMAASMASVLASSGTKGKRFALPHSEVMIHQPSGGAQGQQTEIEIAAEQILKTRKELNTILAENSGQPLEKINIDTERDNYLSAQDAVEYGLIDGIMEKNANLK.

The active-site Nucleophile is the S98. H123 is a catalytic residue.

Belongs to the peptidase S14 family. Fourteen ClpP subunits assemble into 2 heptameric rings which stack back to back to give a disk-like structure with a central cavity, resembling the structure of eukaryotic proteasomes.

The protein localises to the cytoplasm. The enzyme catalyses Hydrolysis of proteins to small peptides in the presence of ATP and magnesium. alpha-casein is the usual test substrate. In the absence of ATP, only oligopeptides shorter than five residues are hydrolyzed (such as succinyl-Leu-Tyr-|-NHMec, and Leu-Tyr-Leu-|-Tyr-Trp, in which cleavage of the -Tyr-|-Leu- and -Tyr-|-Trp bonds also occurs).. In terms of biological role, cleaves peptides in various proteins in a process that requires ATP hydrolysis. Has a chymotrypsin-like activity. Plays a major role in the degradation of misfolded proteins. In Pediococcus pentosaceus (strain ATCC 25745 / CCUG 21536 / LMG 10740 / 183-1w), this protein is ATP-dependent Clp protease proteolytic subunit.